A 170-amino-acid polypeptide reads, in one-letter code: Cytochrome b6-f complex subunit 4 (170 aa).

The next 3 helical transmembrane spans lie at 46 to 66, 105 to 125, and 141 to 161; these read LLFM…GLAV, LLGI…PFIE, and TVFL…TLPL.

This sequence belongs to the cytochrome b family. PetD subfamily. The 4 large subunits of the cytochrome b6-f complex are cytochrome b6, subunit IV (17 kDa polypeptide, PetD), cytochrome f and the Rieske protein, while the 4 small subunits are PetG, PetL, PetM and PetN. The complex functions as a dimer.

It localises to the cellular thylakoid membrane. Functionally, component of the cytochrome b6-f complex, which mediates electron transfer between photosystem II (PSII) and photosystem I (PSI), cyclic electron flow around PSI, and state transitions. The protein is Cytochrome b6-f complex subunit 4 of Synechococcus sp. (strain JA-3-3Ab) (Cyanobacteria bacterium Yellowstone A-Prime).